The chain runs to 398 residues: Phosphoglycerate kinase (398 aa).

Residues 23-25 (DFN), arginine 38, 61-64 (HMGK), arginine 122, and arginine 155 each bind substrate. ATP contacts are provided by residues lysine 206, glycine 297, glutamate 328, and 354 to 357 (GGDS).

It belongs to the phosphoglycerate kinase family. As to quaternary structure, monomer.

It is found in the cytoplasm. It catalyses the reaction (2R)-3-phosphoglycerate + ATP = (2R)-3-phospho-glyceroyl phosphate + ADP. It functions in the pathway carbohydrate degradation; glycolysis; pyruvate from D-glyceraldehyde 3-phosphate: step 2/5. The sequence is that of Phosphoglycerate kinase from Clostridium botulinum (strain Okra / Type B1).